A 373-amino-acid polypeptide reads, in one-letter code: Alpha-N-acetylgalactosaminide alpha-2,6-sialyltransferase 2 (373 aa).

Topologically, residues 1–6 (MDLPRR) are cytoplasmic. The chain crosses the membrane as a helical; Signal-anchor for type II membrane protein span at residues 7–27 (WLFRMLLLVATSSGILLMLYS). The Lumenal segment spans residues 28-373 (SAGQQSPETQ…NAGILWLYQR (346 aa)). Cystine bridges form between Cys-65–Cys-147 and Cys-150–Cys-316. An N-linked (GlcNAc...) asparagine glycan is attached at Asn-103. A CMP-N-acetyl-beta-neuraminate-binding site is contributed by Asn-155. The N-linked (GlcNAc...) asparagine glycan is linked to Asn-160. CMP-N-acetyl-beta-neuraminate contacts are provided by Asn-178, Ser-303, and His-335.

This sequence belongs to the glycosyltransferase 29 family. As to expression, highly expressed in lactating mammary gland and adult testis. Lower levels in kidney.

The protein resides in the golgi apparatus membrane. The enzyme catalyses a beta-D-galactosyl-(1-&gt;3)-N-acetyl-alpha-D-galactosaminyl derivative + CMP-N-acetyl-beta-neuraminate = a beta-D-galactosyl-(1-&gt;3)-[N-acetyl-alpha-neuraminyl-(2-&gt;6)]-N-acetyl-alpha-D-galactosaminyl derivative + CMP + H(+). It catalyses the reaction a 3-O-[N-acetyl-alpha-D-galactosaminyl]-L-threonyl-[protein] + CMP-N-acetyl-beta-neuraminate = a 3-O-[N-acetyl-alpha-neuraminosyl-(2-&gt;6)-N-acetyl-alpha-D-galactosaminyl]-L-threonyl-[protein] + CMP + H(+). The catalysed reaction is a 3-O-[N-acetyl-alpha-neuraminyl-(2-&gt;3)-beta-D-galactosyl-(1-&gt;3)-N-acetyl-alpha-D-galactosaminyl]-L-threonyl-[protein] + CMP-N-acetyl-beta-neuraminate = a 3-O-{alpha-Neu5Ac-(2-&gt;3)-beta-D-Gal-(1-&gt;3)-[alpha-Neu5Ac-(2-&gt;6)]-alpha-D-GalNAc}-L-threonyl-[protein] + CMP + H(+). It participates in protein modification; protein glycosylation. Catalyzes the transfer of N-acetylneuraminyl groups onto glycan chains in glycoproteins. Conjugates sialic acid with an alpha-2-6 linkage to N-acetylgalactosamine (GalNAc) glycan chains linked to serine or threonine in glycoproteins. Sialylates alphaGalNAc- and Galbeta1-&gt;3GalNAc-O-Ser/Thr epitopes also known as Tn and T antigens. This is Alpha-N-acetylgalactosaminide alpha-2,6-sialyltransferase 2 (St6galnac2) from Mus musculus (Mouse).